The chain runs to 640 residues: 1,4-alpha-glucan branching enzyme GlgB (640 aa).

Aspartate 318 (nucleophile) is an active-site residue. Catalysis depends on glutamate 371, which acts as the Proton donor.

It belongs to the glycosyl hydrolase 13 family. GlgB subfamily. As to quaternary structure, monomer.

It catalyses the reaction Transfers a segment of a (1-&gt;4)-alpha-D-glucan chain to a primary hydroxy group in a similar glucan chain.. Its pathway is glycan biosynthesis; glycogen biosynthesis. Functionally, catalyzes the formation of the alpha-1,6-glucosidic linkages in glycogen by scission of a 1,4-alpha-linked oligosaccharide from growing alpha-1,4-glucan chains and the subsequent attachment of the oligosaccharide to the alpha-1,6 position. The sequence is that of 1,4-alpha-glucan branching enzyme GlgB from Francisella philomiragia subsp. philomiragia (strain ATCC 25017 / CCUG 19701 / FSC 153 / O#319-036).